Reading from the N-terminus, the 298-residue chain is Acetylglutamate kinase (298 aa).

Substrate-binding positions include 61-62 (GG), R83, and N188.

It belongs to the acetylglutamate kinase family. ArgB subfamily.

Its subcellular location is the cytoplasm. The enzyme catalyses N-acetyl-L-glutamate + ATP = N-acetyl-L-glutamyl 5-phosphate + ADP. Its pathway is amino-acid biosynthesis; L-arginine biosynthesis; N(2)-acetyl-L-ornithine from L-glutamate: step 2/4. In terms of biological role, catalyzes the ATP-dependent phosphorylation of N-acetyl-L-glutamate. This chain is Acetylglutamate kinase, found in Syntrophobacter fumaroxidans (strain DSM 10017 / MPOB).